A 610-amino-acid polypeptide reads, in one-letter code: MSEIFDAKAFLKTVTSQPGVYRMYDAGGTVIYVGKAKDLKKRLSSYFRSNLASRKTEALVAQIQHIDVTVTHTETEALLLEHNYIKLYQPRYNVLLRDDKSYPFIFLSGDTHPRLAMHRGAKHAKGEYFGPFPNGYAVRETLALLQKIFPIRQCENSVYRNRSRPCLQYQIGRCLGPCVAGLVSEEEYAQQVEYVRLFLSGKDDQVLTQLIARMEKASQDLAFEEAARIRDQIQAVRRVTERQFVSNAGDDLDVIGVAFDAGMACVHVLFIRQGKVLGSRSYFPKVPGGTELGEVVETFVGQFYLQGSQMRTLPGEILLDFNLSDKTLLADSLSELAGRRIHVQTKPRGDRARYLKLARTNAATALITKLSQQSTITQRLTALAAVLKLPAIKRMECFDISHTMGEQTVASCVVFDANGPLRAEYRRYNIAGITPGDDYAAMNQVLRRRYGKAIEESKIPDVILIDGGKGQLAQAKAVFAELDVPWDKHHPLLLGVAKGADRKAGLETLFFEPEGEGFSLPPDSPALHVIQHIRDESHDHAIGGHRKKRAKVKNTSTLETIEGVGPKRRQMLLKYMGGLQGLRNASVEEIAKVPGISQGLAEKIFWSLKH.

The GIY-YIG domain occupies 16 to 94 (SQPGVYRMYD…IKLYQPRYNV (79 aa)). The UVR domain maps to 204–239 (DQVLTQLIARMEKASQDLAFEEAARIRDQIQAVRRV).

The protein belongs to the UvrC family. As to quaternary structure, interacts with UvrB in an incision complex.

The protein localises to the cytoplasm. Functionally, the UvrABC repair system catalyzes the recognition and processing of DNA lesions. UvrC both incises the 5' and 3' sides of the lesion. The N-terminal half is responsible for the 3' incision and the C-terminal half is responsible for the 5' incision. The chain is UvrABC system protein C from Salmonella agona (strain SL483).